The chain runs to 151 residues: Large ribosomal subunit protein uL13 (151 aa).

This sequence belongs to the universal ribosomal protein uL13 family. Part of the 50S ribosomal subunit.

Functionally, this protein is one of the early assembly proteins of the 50S ribosomal subunit, although it is not seen to bind rRNA by itself. It is important during the early stages of 50S assembly. The polypeptide is Large ribosomal subunit protein uL13 (Petrotoga mobilis (strain DSM 10674 / SJ95)).